The sequence spans 179 residues: Large ribosomal subunit protein uL6 (179 aa).

It belongs to the universal ribosomal protein uL6 family. In terms of assembly, part of the 50S ribosomal subunit.

Functionally, this protein binds to the 23S rRNA, and is important in its secondary structure. It is located near the subunit interface in the base of the L7/L12 stalk, and near the tRNA binding site of the peptidyltransferase center. The polypeptide is Large ribosomal subunit protein uL6 (Akkermansia muciniphila (strain ATCC BAA-835 / DSM 22959 / JCM 33894 / BCRC 81048 / CCUG 64013 / CIP 107961 / Muc)).